The following is a 106-amino-acid chain: UPF0122 protein Exig_1902 (106 aa).

This sequence belongs to the UPF0122 family.

In terms of biological role, might take part in the signal recognition particle (SRP) pathway. This is inferred from the conservation of its genetic proximity to ftsY/ffh. May be a regulatory protein. In Exiguobacterium sibiricum (strain DSM 17290 / CCUG 55495 / CIP 109462 / JCM 13490 / 255-15), this protein is UPF0122 protein Exig_1902.